We begin with the raw amino-acid sequence, 510 residues long: Bifunctional purine biosynthesis protein PurH (510 aa).

The MGS-like domain occupies methionine 1–threonine 142.

Belongs to the PurH family.

It carries out the reaction (6R)-10-formyltetrahydrofolate + 5-amino-1-(5-phospho-beta-D-ribosyl)imidazole-4-carboxamide = 5-formamido-1-(5-phospho-D-ribosyl)imidazole-4-carboxamide + (6S)-5,6,7,8-tetrahydrofolate. The enzyme catalyses IMP + H2O = 5-formamido-1-(5-phospho-D-ribosyl)imidazole-4-carboxamide. It participates in purine metabolism; IMP biosynthesis via de novo pathway; 5-formamido-1-(5-phospho-D-ribosyl)imidazole-4-carboxamide from 5-amino-1-(5-phospho-D-ribosyl)imidazole-4-carboxamide (10-formyl THF route): step 1/1. The protein operates within purine metabolism; IMP biosynthesis via de novo pathway; IMP from 5-formamido-1-(5-phospho-D-ribosyl)imidazole-4-carboxamide: step 1/1. This Campylobacter concisus (strain 13826) protein is Bifunctional purine biosynthesis protein PurH.